The sequence spans 1472 residues: Type IV pilus biogenesis factor PilY1 homolog PD_1611 (1472 aa).

Ca(2+)-binding residues include Asp1170, Asp1172, Asp1174, Leu1176, and Asp1178. Over residues 1383–1397 (RGSRSSIGNSDTGAV) the composition is skewed to polar residues. Residues 1383 to 1403 (RGSRSSIGNSDTGAVSTGGDA) are disordered.

The protein belongs to the PilY1 family.

It localises to the fimbrium. In terms of biological role, one of the three PilY1 homologs of X.fastidiosa, which are involved in bacterial twitching motility as component of the filamentous type IV pili (T4P). The twitching motility of this protein is enhanced by calcium, which may provide the bacterium an adaptive advantage in environments with high calcium concentrations. This chain is Type IV pilus biogenesis factor PilY1 homolog PD_1611, found in Xylella fastidiosa (strain Temecula1 / ATCC 700964).